Reading from the N-terminus, the 450-residue chain is uncharacterized protein (450 aa).

It belongs to the heat shock protein 70 family.

This is an uncharacterized protein from Escherichia coli (strain K12).